The chain runs to 142 residues: Transcriptional regulator MraZ (142 aa).

SpoVT-AbrB domains lie at 5–51 (ASSL…PRTE) and 77–120 (AMDV…DKAT).

It belongs to the MraZ family. As to quaternary structure, forms oligomers.

The protein resides in the cytoplasm. It is found in the nucleoid. This is Transcriptional regulator MraZ from Delftia acidovorans (strain DSM 14801 / SPH-1).